Consider the following 557-residue polypeptide: Copine-6 (557 aa).

2 consecutive C2 domains span residues 2–127 (SDPE…TKPL) and 134–263 (TAGK…MQWD). 5 residues coordinate Ca(2+): Asp167, Asp173, Asp229, Asp231, and Asp237. A linker region region spans residues 244–303 (STFQEMQEGTANPGQEMQWDCINPKYRDKKKNYKSSGTVVLAQCTVEKVHTFLDYIMGGC). One can recognise a VWFA domain in the interval 306–526 (SFTVAIDFTA…ALAKCVLAEV (221 aa)).

It belongs to the copine family. As to quaternary structure, interacts (via second C2 domain) with OS9 (via C-terminus); this interaction occurs in a calcium-dependent manner in vitro. May interact with NECAB1. It depends on Ca(2+) as a cofactor. In terms of tissue distribution, widely expressed in the brain. Expressed weakly in the kidney, liver and fetal heart. Expressed in melanocytes.

Its subcellular location is the cytoplasm. It localises to the cell membrane. The protein localises to the endosome. It is found in the cytoplasmic vesicle. The protein resides in the clathrin-coated vesicle. Its subcellular location is the perikaryon. It localises to the cell projection. The protein localises to the dendrite. Functionally, calcium-dependent phospholipid-binding protein that plays a role in calcium-mediated intracellular processes. Binds phospholipid membranes in a calcium-dependent manner. Plays a role in dendrite formation by melanocytes. The polypeptide is Copine-6 (Homo sapiens (Human)).